Here is a 65-residue protein sequence, read N- to C-terminus: Alpha-toxin OD1 (65 aa).

One can recognise an LCN-type CS-alpha/beta domain in the interval R3–R65. The Important for toxin selectivity for individual Nav channel subtype (Nav1.6/SCN8A and Nav1.7/SCN9A), but not for toxin potency motif lies at D9–K11. Intrachain disulfides connect C13–C64, C17–C37, C23–C47, and C27–C49. An Arginine amide modification is found at R65.

It belongs to the long (4 C-C) scorpion toxin superfamily. Sodium channel inhibitor family. Alpha subfamily. As to expression, expressed by the venom gland.

Its subcellular location is the secreted. In terms of biological role, alpha toxins bind voltage-independently at site-3 of sodium channels and inhibit the inactivation of the activated channels. The toxin affect mammalian sodium channels Nav1.7/SCN9A (EC(50)=4.5 nM), Nav1.4/SCN4A (EC(50)=9.6 nM), Nav1.6/SCN8A (EC(50)=30 nM), Nav1.5/SCN5A (only at micromolar concentrations), and insect sodium channel para/tipE (EC(50)=80 nM). In vivo, intraplantar administration of this toxin elicits pain behaviors, including licking and flinching of the hind paw. In Odontobuthus doriae (Yellow Iranian scorpion), this protein is Alpha-toxin OD1.